A 269-amino-acid polypeptide reads, in one-letter code: Shikimate dehydrogenase (NADP(+)) (269 aa).

Shikimate is bound by residues 14–16 (SKS) and Thr-61. The active-site Proton acceptor is Lys-65. Glu-77 contacts NADP(+). 2 residues coordinate shikimate: Asn-86 and Asp-102. NADP(+) is bound by residues 126-130 (GAGGA), 149-154 (NRTLTK), and Met-213. Position 215 (Tyr-215) interacts with shikimate. Gly-238 contacts NADP(+).

This sequence belongs to the shikimate dehydrogenase family. As to quaternary structure, homodimer.

It carries out the reaction shikimate + NADP(+) = 3-dehydroshikimate + NADPH + H(+). It participates in metabolic intermediate biosynthesis; chorismate biosynthesis; chorismate from D-erythrose 4-phosphate and phosphoenolpyruvate: step 4/7. Its function is as follows. Involved in the biosynthesis of the chorismate, which leads to the biosynthesis of aromatic amino acids. Catalyzes the reversible NADPH linked reduction of 3-dehydroshikimate (DHSA) to yield shikimate (SA). The polypeptide is Shikimate dehydrogenase (NADP(+)) (Actinobacillus succinogenes (strain ATCC 55618 / DSM 22257 / CCUG 43843 / 130Z)).